The primary structure comprises 269 residues: 5'-nucleotidase SurE (269 aa).

A divalent metal cation-binding residues include D8, D9, S40, and N93.

Belongs to the SurE nucleotidase family. The cofactor is a divalent metal cation.

The protein resides in the cytoplasm. The enzyme catalyses a ribonucleoside 5'-phosphate + H2O = a ribonucleoside + phosphate. Functionally, nucleotidase that shows phosphatase activity on nucleoside 5'-monophosphates. This chain is 5'-nucleotidase SurE, found in Caulobacter sp. (strain K31).